We begin with the raw amino-acid sequence, 1114 residues long: Zinc finger E-box-binding homeobox 1 (1114 aa).

2 disordered regions span residues 1–105 (MADG…EVGC) and 142–163 (APEEDQRQGTPEASGQDENGTP). Low complexity predominate over residues 15-30 (PRRNNVTNYNNVIEAN). The segment covering 149–160 (QGTPEASGQDEN) has biased composition (polar residues). 3 C2H2-type zinc fingers span residues 170 to 193 (LTCPYCDRGYKRFTSLKEHIKYRH), 200 to 222 (FSCSLCSYTFAYRTQLDRHMTSH), and 240 to 262 (FKCTECGKAFKYKHHLKEHLRIH). A C2H2-type 4; atypical zinc finger spans residues 268–292 (YECPNCKKRFSHSGSYSSHISSKKC). 4 disordered regions span residues 304-326 (SGLKTSQCSSPSLSASPGSPARP), 491-529 (NLKKEHSVPTNSCKNEKLPEDLTVKSEKDKNFEGETNDS), 553-588 (KNPPQLPQSSGTEAEKPSSPAPSETGENNLSPGQPP), and 636-716 (QISV…SRNS). Residues 309 to 326 (SQCSSPSLSASPGSPARP) are compositionally biased toward low complexity. Basic and acidic residues predominate over residues 504 to 523 (KNEKLPEDLTVKSEKDKNFE). 2 stretches are compositionally biased toward polar residues: residues 573–584 (APSETGENNLSP) and 636–681 (QISV…QNPA). The homeobox; atypical DNA-binding region spans 581–640 (NLSPGQPPLKNLLSLLKAYYALNAQPSAEELSKIADSVNLPLDVVKKWFEKMQAGQISVQ). The span at 682–716 (NTSKSQTSSGGSTQNGSRSSTPSPSPLNLSSSRNS) shows a compositional bias: low complexity. The short motif at 767–771 (PLNLT) is the CTBP-binding motif element. Polar residues-rich tracts occupy residues 852 to 866 (AVQETPPKQTQANGS) and 874 to 890 (SSEGVSNVEDQNDSDST). The interval 852–898 (AVQETPPKQTQANGSQDERQDTSSEGVSNVEDQNDSDSTPPKKKMRK) is disordered. 2 C2H2-type zinc fingers span residues 904–926 (YACDLCDKIFQKSSSLLRHKYEH) and 932–954 (HECGICKKAFKHKHHLIEHMRLH). Residues 960-981 (YQCDKCGKRFSHSGSYSQHMNH) form a C2H2-type 7; atypical zinc finger. The disordered stretch occupies residues 989–1114 (EAEERDSTEQ…QVSEEKTNKA (126 aa)). A compositionally biased stretch (acidic residues) spans 1031–1047 (EEEEDSEKEEEEEEEKD). Over residues 1048 to 1062 (VEGLQEEKECRKLQD) the composition is skewed to basic and acidic residues. Residues 1063 to 1078 (VEEEEEVEEEEEEEEG) show a composition bias toward acidic residues. The span at 1079–1089 (KTEGNKNDDVV) shows a compositional bias: basic and acidic residues.

Belongs to the delta-EF1/ZFH-1 C2H2-type zinc-finger family. In terms of tissue distribution, expression is developmentally regulated with high expression in mesoderm, nervous system and lens.

The protein localises to the nucleus. Functionally, acts as a transcriptional repressor. Positively regulates neuronal differentiation. Represses transcription by binding to the E box-containing promoter. Binds to delta 1-crystallin enhancer core and represses lens-specific transcription. It also binds many other non-lens specific DNA sequences. In Gallus gallus (Chicken), this protein is Zinc finger E-box-binding homeobox 1 (ZEB1).